The primary structure comprises 242 residues: Uroporphyrinogen-III C-methyltransferase (242 aa).

S-adenosyl-L-homocysteine is bound by residues P12, 88 to 90 (GGD), 118 to 119 (TS), and M170.

It belongs to the precorrin methyltransferase family. In terms of assembly, homodimer.

The catalysed reaction is uroporphyrinogen III + 2 S-adenosyl-L-methionine = precorrin-2 + 2 S-adenosyl-L-homocysteine + H(+). It functions in the pathway cofactor biosynthesis; adenosylcobalamin biosynthesis; precorrin-2 from uroporphyrinogen III: step 1/1. In terms of biological role, catalyzes the two successive C-2 and C-7 methylation reactions involved in the conversion of uroporphyrinogen III to precorrin-2 via the intermediate formation of precorrin-1. It is a step in the biosynthesis of both cobalamin (vitamin B12) and coenzyme F430. The protein is Uroporphyrinogen-III C-methyltransferase (cobA) of Methanocaldococcus jannaschii (strain ATCC 43067 / DSM 2661 / JAL-1 / JCM 10045 / NBRC 100440) (Methanococcus jannaschii).